The sequence spans 121 residues: Small ribosomal subunit protein uS13 (121 aa).

Positions His91–Lys121 are disordered.

Belongs to the universal ribosomal protein uS13 family. In terms of assembly, part of the 30S ribosomal subunit. Forms a loose heterodimer with protein S19. Forms two bridges to the 50S subunit in the 70S ribosome.

In terms of biological role, located at the top of the head of the 30S subunit, it contacts several helices of the 16S rRNA. In the 70S ribosome it contacts the 23S rRNA (bridge B1a) and protein L5 of the 50S subunit (bridge B1b), connecting the 2 subunits; these bridges are implicated in subunit movement. Contacts the tRNAs in the A and P-sites. The protein is Small ribosomal subunit protein uS13 of Staphylococcus haemolyticus (strain JCSC1435).